The following is a 142-amino-acid chain: Protein archease (142 aa).

The Ca(2+) site is built by aspartate 12, aspartate 141, and isoleucine 142.

Belongs to the archease family. As to quaternary structure, in solution, exists as a monomer, trimer and hexamer. Oligomeric states form a tripartite complex with tRNA and PAB1947 methyltransferase.

Its function is as follows. Activates the tRNA-splicing ligase complex by facilitating the enzymatic turnover of catalytic subunit RtcB. Acts by promoting the guanylylation of RtcB, a key intermediate step in tRNA ligation. Can also alter the NTP specificity of RtcB such that ATP, dGTP or ITP is used efficiently. Chaperone or modulator of proteins involved in DNA or RNA processing. Protects the tRNA (cytosine-5-)-methyltransferase PAB1947 against aggregation and increases its specificity. This Pyrococcus abyssi (strain GE5 / Orsay) protein is Protein archease.